The following is a 264-amino-acid chain: 3-methyl-2-oxobutanoate hydroxymethyltransferase (264 aa).

The Mg(2+) site is built by Asp-45 and Asp-84. 3-methyl-2-oxobutanoate is bound by residues 45–46 (DS), Asp-84, and Lys-112. Glu-114 is a Mg(2+) binding site. Residue Glu-181 is the Proton acceptor of the active site.

The protein belongs to the PanB family. As to quaternary structure, homodecamer; pentamer of dimers. Requires Mg(2+) as cofactor.

It is found in the cytoplasm. It carries out the reaction 3-methyl-2-oxobutanoate + (6R)-5,10-methylene-5,6,7,8-tetrahydrofolate + H2O = 2-dehydropantoate + (6S)-5,6,7,8-tetrahydrofolate. The protein operates within cofactor biosynthesis; (R)-pantothenate biosynthesis; (R)-pantoate from 3-methyl-2-oxobutanoate: step 1/2. Its function is as follows. Catalyzes the reversible reaction in which hydroxymethyl group from 5,10-methylenetetrahydrofolate is transferred onto alpha-ketoisovalerate to form ketopantoate. This Shewanella sp. (strain MR-4) protein is 3-methyl-2-oxobutanoate hydroxymethyltransferase.